We begin with the raw amino-acid sequence, 469 residues long: MKHIRTRFAPSPTGYLHIGGVRTALFSWLFARQNNGAFILRIEDTDVARSTQASVDAILEGLRWLQIDWNEGPYYQSQRMDRYREVIEQLVKSDDAYRCYCSKERLIELRNTQLKNKQKPRYDGFCRDKAPRQSNEPFVIRFRNPVEGAVVFDDLIRGTISIDNRELDDLIIARSDGGPTYNLTVVVDDWDMKITHVIRGDDHINNTPRQINILHALGAELPHYGHVPMILGPDGKRLSKRHGAVSVLQYRDEGYLPEALMNYLIRLGWAHGDQEIFSREEMVQLFDISAVSRSPAAFNPEKLLWLNQHYLKTVSPTIIAEAFATQLEKAGTDLRNGPSLEQVIALQAERTKTLKEMAQRSLYFYQEVRSYDEKAARKHLLATIVEPLQRVRERLASLPSWEKEAIHEVIVETAQLHQLKLGQLAQPIRVALTGDTVSPPIDATLYLIGRDSALKRLDHAIRFIHQGMG.

Positions 10–20 match the 'HIGH' region motif; that stretch reads PSPTGYLHIGG. Residues C99, C101, C126, and D128 each coordinate Zn(2+). Positions 237-241 match the 'KMSKS' region motif; the sequence is RLSKR. K240 contacts ATP.

Belongs to the class-I aminoacyl-tRNA synthetase family. Glutamate--tRNA ligase type 1 subfamily. Monomer. Zn(2+) serves as cofactor.

Its subcellular location is the cytoplasm. The catalysed reaction is tRNA(Glu) + L-glutamate + ATP = L-glutamyl-tRNA(Glu) + AMP + diphosphate. In terms of biological role, catalyzes the attachment of glutamate to tRNA(Glu) in a two-step reaction: glutamate is first activated by ATP to form Glu-AMP and then transferred to the acceptor end of tRNA(Glu). The sequence is that of Glutamate--tRNA ligase 2 from Coxiella burnetii (strain CbuG_Q212) (Coxiella burnetii (strain Q212)).